We begin with the raw amino-acid sequence, 251 residues long: Octanoyltransferase (251 aa).

Residues 56–241 enclose the BPL/LPL catalytic domain; it reads AETPDEIWIV…NLDGASAAAD (186 aa). Residues 96–103, 168–170, and 181–183 contribute to the substrate site; these read RGGQITYH, ALG, and GLS. The Acyl-thioester intermediate role is filled by C199.

This sequence belongs to the LipB family.

It is found in the cytoplasm. The enzyme catalyses octanoyl-[ACP] + L-lysyl-[protein] = N(6)-octanoyl-L-lysyl-[protein] + holo-[ACP] + H(+). The protein operates within protein modification; protein lipoylation via endogenous pathway; protein N(6)-(lipoyl)lysine from octanoyl-[acyl-carrier-protein]: step 1/2. Its function is as follows. Catalyzes the transfer of endogenously produced octanoic acid from octanoyl-acyl-carrier-protein onto the lipoyl domains of lipoate-dependent enzymes. Lipoyl-ACP can also act as a substrate although octanoyl-ACP is likely to be the physiological substrate. This chain is Octanoyltransferase, found in Burkholderia vietnamiensis (strain G4 / LMG 22486) (Burkholderia cepacia (strain R1808)).